The sequence spans 76 residues: Large ribosomal subunit protein eL20 (76 aa).

This sequence belongs to the eukaryotic ribosomal protein eL20 family. As to quaternary structure, part of the 50S ribosomal subunit. Binds 23S rRNA.

The polypeptide is Large ribosomal subunit protein eL20 (Methanocaldococcus jannaschii (strain ATCC 43067 / DSM 2661 / JAL-1 / JCM 10045 / NBRC 100440) (Methanococcus jannaschii)).